Reading from the N-terminus, the 315-residue chain is S-methyl-5'-thioadenosine phosphorylase (315 aa).

Residues Ser-22, 65-66 (RH), and 98-99 (SA) contribute to the phosphate site. Met-205 provides a ligand contact to substrate. Ser-206 lines the phosphate pocket. 229 to 231 (DYD) contributes to the substrate binding site.

This sequence belongs to the PNP/MTAP phosphorylase family. MTAP subfamily. Homotrimer.

The protein resides in the cytoplasm. Its subcellular location is the nucleus. The enzyme catalyses S-methyl-5'-thioadenosine + phosphate = 5-(methylsulfanyl)-alpha-D-ribose 1-phosphate + adenine. Its pathway is amino-acid biosynthesis; L-methionine biosynthesis via salvage pathway; S-methyl-5-thio-alpha-D-ribose 1-phosphate from S-methyl-5'-thioadenosine (phosphorylase route): step 1/1. Catalyzes the reversible phosphorylation of S-methyl-5'-thioadenosine (MTA) to adenine and 5-methylthioribose-1-phosphate. Involved in the breakdown of MTA, a major by-product of polyamine biosynthesis. Responsible for the first step in the methionine salvage pathway after MTA has been generated from S-adenosylmethionine. Has broad substrate specificity with 6-aminopurine nucleosides as preferred substrates. This is S-methyl-5'-thioadenosine phosphorylase from Mycosarcoma maydis (Corn smut fungus).